Here is a 469-residue protein sequence, read N- to C-terminus: Putative arginine/ornithine antiporter (469 aa).

The next 12 membrane-spanning stretches (helical) occupy residues 8 to 28, 44 to 64, 90 to 110, 144 to 164, 179 to 199, 213 to 233, 254 to 274, 301 to 321, 347 to 367, 375 to 395, 417 to 437, and 439 to 459; these read GFWL…IFSL, AWLL…HLSI, AGFT…VAII, LTFA…VASI, VLGF…SLFG, IGIG…FVGI, ITGL…TMGV, VIMA…WILL, SPVI…FSVI, FTFL…VSAI, DGLI…TGTA, and LTTF…YPFV.

This sequence belongs to the amino acid-polyamine-organocation (APC) superfamily. Basic amino acid/polyamine antiporter (APA) (TC 2.A.3.2) family.

The protein localises to the cell membrane. The catalysed reaction is L-ornithine(in) + L-arginine(out) = L-ornithine(out) + L-arginine(in). Functionally, catalyzes electroneutral exchange between L-arginine and L-ornithine. This chain is Putative arginine/ornithine antiporter (yvsH), found in Bacillus subtilis (strain 168).